The chain runs to 243 residues: Tegument protein UL14 homolog (243 aa).

The protein belongs to the alphaherpesvirinae HHV-1 UL14 protein family. In terms of processing, phosphorylated.

The protein localises to the virion tegument. It is found in the host cytoplasm. It localises to the host nucleus. Contributes to the nuclear transport of the viral transcriptional activator VP16 homolog during the early phase of infection. Therefore, participates indirectly in the regulation of the immediate-early gene expression. Additionally, seems to be important for efficient nuclear targeting of capsids. The sequence is that of Tegument protein UL14 homolog (MDV026) from Gallid herpesvirus 2 (strain Chicken/Md5/ATCC VR-987) (GaHV-2).